Consider the following 222-residue polypeptide: Eukaryotic translation initiation factor 3 subunit K (222 aa).

The PCI domain occupies Tyr46–Lys208.

Belongs to the eIF-3 subunit K family. Component of the eukaryotic translation initiation factor 3 (eIF-3) complex. The eIF-3 complex interacts with pix.

It localises to the cytoplasm. Functionally, component of the eukaryotic translation initiation factor 3 (eIF-3) complex, which is involved in protein synthesis of a specialized repertoire of mRNAs and, together with other initiation factors, stimulates binding of mRNA and methionyl-tRNAi to the 40S ribosome. The eIF-3 complex specifically targets and initiates translation of a subset of mRNAs involved in cell proliferation. The protein is Eukaryotic translation initiation factor 3 subunit K of Drosophila virilis (Fruit fly).